The primary structure comprises 239 residues: Probable transcriptional regulatory protein BPUM_0743 (239 aa).

It belongs to the TACO1 family. YeeN subfamily.

It is found in the cytoplasm. The chain is Probable transcriptional regulatory protein BPUM_0743 from Bacillus pumilus (strain SAFR-032).